The chain runs to 142 residues: Aspartate 1-decarboxylase (142 aa).

Ser25 (schiff-base intermediate with substrate; via pyruvic acid) is an active-site residue. Ser25 is modified (pyruvic acid (Ser)). Residue Thr57 coordinates substrate. Residue Tyr58 is the Proton donor of the active site. 73–75 contacts substrate; that stretch reads GAA.

This sequence belongs to the PanD family. In terms of assembly, heterooctamer of four alpha and four beta subunits. It depends on pyruvate as a cofactor. Post-translationally, is synthesized initially as an inactive proenzyme, which is activated by self-cleavage at a specific serine bond to produce a beta-subunit with a hydroxyl group at its C-terminus and an alpha-subunit with a pyruvoyl group at its N-terminus.

It localises to the cytoplasm. The catalysed reaction is L-aspartate + H(+) = beta-alanine + CO2. Its pathway is cofactor biosynthesis; (R)-pantothenate biosynthesis; beta-alanine from L-aspartate: step 1/1. Functionally, catalyzes the pyruvoyl-dependent decarboxylation of aspartate to produce beta-alanine. In Arthrobacter sp. (strain FB24), this protein is Aspartate 1-decarboxylase.